A 265-amino-acid chain; its full sequence is Small ribosomal subunit protein uS2 (265 aa).

The segment at 226–265 (AAAPNSASVREEEFSADAADEGKGRRAPAKKGDKKADAAE) is disordered. Residues 245 to 265 (DEGKGRRAPAKKGDKKADAAE) show a composition bias toward basic and acidic residues.

Belongs to the universal ribosomal protein uS2 family.

The chain is Small ribosomal subunit protein uS2 from Xanthomonas axonopodis pv. citri (strain 306).